A 307-amino-acid chain; its full sequence is Ethylmalonyl-CoA decarboxylase (307 aa).

At Ala-2 the chain carries N-acetylalanine. Residue Lys-217 is modified to N6-acetyllysine; alternate. Residue Lys-217 is modified to N6-succinyllysine; alternate. Lys-301 carries the post-translational modification N6-succinyllysine.

This sequence belongs to the enoyl-CoA hydratase/isomerase family.

It localises to the cytoplasm. It is found in the cytosol. It catalyses the reaction (2S)-ethylmalonyl-CoA + H(+) = butanoyl-CoA + CO2. It carries out the reaction (S)-methylmalonyl-CoA + H(+) = propanoyl-CoA + CO2. The catalysed reaction is (2R)-ethylmalonyl-CoA + H(+) = butanoyl-CoA + CO2. Decarboxylates ethylmalonyl-CoA, a potentially toxic metabolite, to form butyryl-CoA, suggesting it might be involved in metabolite proofreading. Acts preferentially on (S)-ethylmalonyl-CoA but also has some activity on the (R)-isomer. Also has methylmalonyl-CoA decarboxylase activity at lower level. This chain is Ethylmalonyl-CoA decarboxylase (ECHDC1), found in Homo sapiens (Human).